The chain runs to 404 residues: Keratin, type I cuticular Ha3-I (404 aa).

A head region spans residues 1 to 56 (MPYNCCLPAMSCRTSCSSRPCVPPSCHGCTLPGACNIPANVGNCNWFCEGSFNGNE). Positions 56–367 (EKETMQFLND…GLLESEDCKL (312 aa)) constitute an IF rod domain. Positions 57–91 (KETMQFLNDRLASYMEKVRQLERENAELECRIQER) are coil 1A. Residues 92–102 (NQQQDPLVCPA) form a linker 1 region. Residues 103–203 (YQAYFRTIEE…HEQEVNTLRC (101 aa)) form a coil 1B region. The linker 12 stretch occupies residues 204-219 (QLGDRLNVEVDAAPTV). A coil 2 region spans residues 220–363 (DLNRVLNETR…NTYRGLLESE (144 aa)). The tract at residues 364-404 (DCKLPCNPCATTNACDKPIGPCVPNPCVTRPRCGPCNTFVR) is tail.

The protein belongs to the intermediate filament family.

This chain is Keratin, type I cuticular Ha3-I, found in Mus musculus (Mouse).